A 246-amino-acid chain; its full sequence is Small ribosomal subunit protein uS2 (246 aa).

It belongs to the universal ribosomal protein uS2 family.

The sequence is that of Small ribosomal subunit protein uS2 from Burkholderia pseudomallei (strain 668).